Reading from the N-terminus, the 448-residue chain is Binary larvicide subunit BinB (448 aa).

The beta-trefoil domain stretch occupies residues 1–198 (MCDSKDNSGV…TAFVNSSFYA (198 aa)). Cysteines 67 and 161 form a disulfide. Residues 199 to 448 (AAIPQLPQTS…NEELIPKINQ (250 aa)) form a probable pore-forming domain region.

It belongs to the toxin_10 family. In terms of assembly, forms a heterodimer with BinA. Processed by proteases extracted from mosquito larval gut.

It is found in the spore. The protein localises to the perispore. Its function is as follows. Component of a binary toxin active against Culex and some Aedes mosquito larvae; mortality towards both C.quinquefasciatus and A.atropalpus is maximal by 48 hours. A.aegypti is not very susceptible to this toxin. This subunit is responsible for localized binding to specific regions of the host larval gut. Binary toxin internalization into host gut cells requires both proteins. The protein is Binary larvicide subunit BinB (binB) of Lysinibacillus sphaericus (Bacillus sphaericus).